The following is a 455-amino-acid chain: Kynurenine 3-monooxygenase (455 aa).

This sequence belongs to the aromatic-ring hydroxylase family. KMO subfamily. FAD is required as a cofactor.

The catalysed reaction is L-kynurenine + NADPH + O2 + H(+) = 3-hydroxy-L-kynurenine + NADP(+) + H2O. Its pathway is cofactor biosynthesis; NAD(+) biosynthesis; quinolinate from L-kynurenine: step 1/3. In terms of biological role, catalyzes the hydroxylation of L-kynurenine (L-Kyn) to form 3-hydroxy-L-kynurenine (L-3OHKyn). Required for synthesis of quinolinic acid. The protein is Kynurenine 3-monooxygenase of Xanthomonas oryzae pv. oryzae (strain KACC10331 / KXO85).